A 994-amino-acid polypeptide reads, in one-letter code: Seizure protein 6 homolog (994 aa).

The N-terminal stretch at Met-1–Gly-19 is a signal peptide. The Extracellular segment spans residues Leu-20 to His-925. Residues Gly-28 to Gln-50 form a disordered region. 2 O-glycosylated at two sites regions span residues Thr-38 to Thr-47 and Thr-59 to Thr-63. Disordered regions lie at residues Leu-88–Ser-146, Ile-171–Met-191, and Pro-241–Leu-261. Positions Pro-93–Leu-107 are enriched in pro residues. 2 stretches are compositionally biased toward polar residues: residues Asn-112–Thr-123 and Ala-172–Gln-185. N-linked (GlcNAc...) asparagine glycosylation is present at Asn-289. One can recognise a Sushi 1 domain in the interval Leu-355–Ala-414. Cystine bridges form between Cys-357–Cys-397, Cys-383–Cys-412, Cys-416–Cys-443, Cys-532–Cys-574, Cys-559–Cys-589, Cys-593–Cys-619, Cys-710–Cys-752, Cys-738–Cys-765, Cys-771–Cys-813, Cys-799–Cys-830, Cys-838–Cys-880, and Cys-866–Cys-895. 3 N-linked (GlcNAc...) asparagine glycosylation sites follow: Asn-399, Asn-436, and Asn-541. The region spanning Cys-416–Phe-527 is the CUB 1 domain. The Sushi 2 domain occupies Gly-530–Ala-591. Residues Cys-593–Val-704 enclose the CUB 2 domain. Sushi domains lie at Asp-708–Arg-767, Thr-769–Leu-832, and Lys-836–Ala-897. A helical membrane pass occupies residues Ile-926–Phe-946. At Tyr-947–Ile-994 the chain is on the cytoplasmic side.

This sequence belongs to the SEZ6 family. In terms of processing, glycosylated.

It localises to the cell membrane. May play a role in cell-cell recognition and in neuronal membrane signaling. Seems to be important for the achievement of the necessary balance between dendrite elongation and branching during the elaboration of a complex dendritic arbor. Involved in the development of appropriate excitatory synaptic connectivity. This is Seizure protein 6 homolog (SEZ6) from Homo sapiens (Human).